A 27-amino-acid polypeptide reads, in one-letter code: Larval-specific very high density lipoprotein (27 aa).

Homodimer. As to expression, hemolymph.

The protein localises to the secreted. It is found in the extracellular space. Its function is as follows. Unknown (it might play a role in lipid transport and/or storage protein metabolism during metamorphosis). The sequence is that of Larval-specific very high density lipoprotein from Apis mellifera (Honeybee).